We begin with the raw amino-acid sequence, 366 residues long: Eukaryotic translation initiation factor 3 subunit H (366 aa).

Residues 12 to 161 (VKVEALVVMK…LRAFRLSPKF (150 aa)) form the MPN domain.

The protein belongs to the eIF-3 subunit H family. In terms of assembly, component of the eukaryotic translation initiation factor 3 (eIF-3) complex.

It is found in the cytoplasm. Component of the eukaryotic translation initiation factor 3 (eIF-3) complex, which is involved in protein synthesis of a specialized repertoire of mRNAs and, together with other initiation factors, stimulates binding of mRNA and methionyl-tRNAi to the 40S ribosome. The eIF-3 complex specifically targets and initiates translation of a subset of mRNAs involved in cell proliferation. This Emericella nidulans (strain FGSC A4 / ATCC 38163 / CBS 112.46 / NRRL 194 / M139) (Aspergillus nidulans) protein is Eukaryotic translation initiation factor 3 subunit H.